The chain runs to 61 residues: Small ribosomal subunit protein uS14 (61 aa).

Residues cysteine 24, cysteine 27, cysteine 40, and cysteine 43 each contribute to the Zn(2+) site.

This sequence belongs to the universal ribosomal protein uS14 family. Zinc-binding uS14 subfamily. Part of the 30S ribosomal subunit. Contacts proteins S3 and S10. It depends on Zn(2+) as a cofactor.

Its function is as follows. Binds 16S rRNA, required for the assembly of 30S particles and may also be responsible for determining the conformation of the 16S rRNA at the A site. In Kosmotoga olearia (strain ATCC BAA-1733 / DSM 21960 / TBF 19.5.1), this protein is Small ribosomal subunit protein uS14.